Reading from the N-terminus, the 68-residue chain is Large ribosomal subunit protein uL29 (68 aa).

It belongs to the universal ribosomal protein uL29 family.

This is Large ribosomal subunit protein uL29 (rpl29) from Pyrococcus abyssi (strain GE5 / Orsay).